The primary structure comprises 278 residues: Manganese import system permease protein ScaB (278 aa).

The next 8 membrane-spanning stretches (helical) occupy residues 18 to 38 (ALIT…FIIL), 40 to 60 (GMSL…ALSF), 61 to 81 (ILGI…SILI), 136 to 156 (VTIG…RPLL), 172 to 192 (VKLY…TAMQ), 194 to 214 (VGTI…YLYA), 220 to 240 (MMLL…FIGY), and 244 to 264 (IAVG…SFFI).

Belongs to the ABC-3 integral membrane protein family.

It localises to the cell membrane. Functionally, part of an ABC transporter complex involved in manganese import. In Streptococcus pneumoniae, this protein is Manganese import system permease protein ScaB.